The chain runs to 183 residues: RNA pyrophosphohydrolase (183 aa).

In terms of domain architecture, Nudix hydrolase spans 6–149 (GYRPNVGIIL…KREVYRLALE (144 aa)). A Nudix box motif is present at residues 38–59 (GGINAGETPEQAMFRELEEEVG).

Belongs to the Nudix hydrolase family. RppH subfamily. A divalent metal cation serves as cofactor.

Accelerates the degradation of transcripts by removing pyrophosphate from the 5'-end of triphosphorylated RNA, leading to a more labile monophosphorylated state that can stimulate subsequent ribonuclease cleavage. The chain is RNA pyrophosphohydrolase from Thiobacillus denitrificans (strain ATCC 25259 / T1).